Consider the following 421-residue polypeptide: Eukaryotic translation initiation factor 3 subunit E (421 aa).

The PCI domain occupies Phe215–Val394.

Belongs to the eIF-3 subunit E family. Component of the eukaryotic translation initiation factor 3 (eIF-3) complex.

The protein resides in the cytoplasm. Functionally, component of the eukaryotic translation initiation factor 3 (eIF-3) complex, which is involved in protein synthesis of a specialized repertoire of mRNAs and, together with other initiation factors, stimulates binding of mRNA and methionyl-tRNAi to the 40S ribosome. The eIF-3 complex specifically targets and initiates translation of a subset of mRNAs involved in cell proliferation. The protein is Eukaryotic translation initiation factor 3 subunit E of Yarrowia lipolytica (strain CLIB 122 / E 150) (Yeast).